The following is a 223-amino-acid chain: Deoxyribose-phosphate aldolase (223 aa).

Asp92 acts as the Proton donor/acceptor in catalysis. The active-site Schiff-base intermediate with acetaldehyde is the Lys153. The Proton donor/acceptor role is filled by Lys182.

It belongs to the DeoC/FbaB aldolase family. DeoC type 1 subfamily.

Its subcellular location is the cytoplasm. It catalyses the reaction 2-deoxy-D-ribose 5-phosphate = D-glyceraldehyde 3-phosphate + acetaldehyde. It participates in carbohydrate degradation; 2-deoxy-D-ribose 1-phosphate degradation; D-glyceraldehyde 3-phosphate and acetaldehyde from 2-deoxy-alpha-D-ribose 1-phosphate: step 2/2. Functionally, catalyzes a reversible aldol reaction between acetaldehyde and D-glyceraldehyde 3-phosphate to generate 2-deoxy-D-ribose 5-phosphate. In Mycoplasmoides gallisepticum (strain R(low / passage 15 / clone 2)) (Mycoplasma gallisepticum), this protein is Deoxyribose-phosphate aldolase.